The sequence spans 504 residues: L-carnitine/gamma-butyrobetaine antiporter (504 aa).

Transmembrane regions (helical) follow at residues 10–30 (IEPK…WLTV), 51–71 (WGWA…WLVF), 92–112 (IFMM…SIEI), 143–163 (GPLP…FFFV), 195–215 (FYLV…TPLV), 231–251 (LDAI…ACGL), 263–283 (SYLS…SFIM), 316–336 (WTVF…IFLA), 347–367 (LCFG…TVLG), 403–423 (LSTA…VTLI), 446–466 (LLVR…LLAL), and 475–495 (AIIA…LSFI).

Belongs to the BCCT transporter (TC 2.A.15) family. CaiT subfamily. As to quaternary structure, homotrimer.

The protein localises to the cell inner membrane. The catalysed reaction is 4-(trimethylamino)butanoate(in) + (R)-carnitine(out) = 4-(trimethylamino)butanoate(out) + (R)-carnitine(in). Its pathway is amine and polyamine metabolism; carnitine metabolism. Catalyzes the exchange of L-carnitine for gamma-butyrobetaine. The protein is L-carnitine/gamma-butyrobetaine antiporter of Escherichia fergusonii (strain ATCC 35469 / DSM 13698 / CCUG 18766 / IAM 14443 / JCM 21226 / LMG 7866 / NBRC 102419 / NCTC 12128 / CDC 0568-73).